Here is a 343-residue protein sequence, read N- to C-terminus: Nuclease EXOG, mitochondrial (343 aa).

Catalysis depends on His121, which acts as the Proton acceptor. Residue Asn152 participates in a divalent metal cation binding.

It belongs to the DNA/RNA non-specific endonuclease family. As to quaternary structure, homodimer. A divalent metal cation serves as cofactor.

The protein localises to the mitochondrion inner membrane. Endo/exonuclease with nicking activity towards supercoiled DNA, a preference for single-stranded DNA and 5'-3' exonuclease activity. This chain is Nuclease EXOG, mitochondrial (exog), found in Danio rerio (Zebrafish).